The sequence spans 305 residues: Porphobilinogen deaminase (305 aa).

C240 bears the S-(dipyrrolylmethanemethyl)cysteine mark.

This sequence belongs to the HMBS family. Monomer. The cofactor is dipyrromethane.

It catalyses the reaction 4 porphobilinogen + H2O = hydroxymethylbilane + 4 NH4(+). It participates in porphyrin-containing compound metabolism; protoporphyrin-IX biosynthesis; coproporphyrinogen-III from 5-aminolevulinate: step 2/4. In terms of biological role, tetrapolymerization of the monopyrrole PBG into the hydroxymethylbilane pre-uroporphyrinogen in several discrete steps. This is Porphobilinogen deaminase from Xylella fastidiosa (strain M23).